We begin with the raw amino-acid sequence, 1548 residues long: Dual oxidase 2 (1548 aa).

Residues 1–25 (MLRARPEALMLLGALLTGSLGPSGN) form the signal peptide. At 26-601 (QDALSLPWEV…EGSSPGFAIT (576 aa)) the chain is on the extracellular side. The tract at residues 30-596 (SLPWEVQRYD…VLDFFEGSSP (567 aa)) is peroxidase-like; mediates peroxidase activity. Residues Asn100, Asn348, Asn382, Asn455, and Asn537 are each glycosylated (N-linked (GlcNAc...) asparagine). An intrachain disulfide couples Cys124 to Cys1162. A helical transmembrane segment spans residues 602–622 (IIALCCLPLVSLLLSGVVAYF). Residues 623 to 1041 (RGREHKKLQK…KRFVENYRRH (419 aa)) lie on the Cytoplasmic side of the membrane. 3 EF-hand domains span residues 819-854 (PQDM…FMKG), 855-890 (SPED…FIEI), and 899-934 (QLAE…HDSE). 9 residues coordinate Ca(2+): Asp832, Asp834, Asn836, Tyr838, Glu843, Asp868, Asp870, Asn872, and Glu879. The interaction with TXNDC11 stretch occupies residues 960–1245 (ISCRVSFITR…GSYALIQLPT (286 aa)). The tract at residues 971–991 (PGERSHPQGLGPPAPEAPELG) is disordered. A helical membrane pass occupies residues 1042–1062 (IVCVAIFSAICVGVFADRAYY). Over 1063–1076 (YGFASPPSDIAQTT) the chain is Extracellular. A helical transmembrane segment spans residues 1077–1097 (LVGIILSRGTAASVSFMFSYI). Residues 1084–1266 (RGTAASVSFM…YGGDKLVSLS (183 aa)) enclose the Ferric oxidoreductase domain. Over 1098–1128 (LLTMCRNLITFLRETFLNRYVPFDAAVDFHR) the chain is Cytoplasmic. The chain crosses the membrane as a helical span at residues 1129 to 1151 (WIAMAAVVLAILHSAGHAVNVYI). At 1152–1185 (FSVSPLSLLACIFPNVFVNDGSKLPQKFYWWFFQ) the chain is on the extracellular side. A helical membrane pass occupies residues 1186–1206 (TVPGMTGVLLLLVLAIMYVFA). The Cytoplasmic portion of the chain corresponds to 1207–1223 (SHHFRRRSFRGFWLTHH). The next 2 membrane-spanning stretches (helical) occupy residues 1224–1244 (LYIL…IQLP) and 1245–1265 (TFHI…LVSL). The Cytoplasmic segment spans residues 1266 to 1548 (SRKKVEISVV…AHFMHHYENF (283 aa)). The 107-residue stretch at 1267–1373 (RKKVEISVVK…DGPFGEGHQE (107 aa)) folds into the FAD-binding FR-type domain.

The protein in the N-terminal section; belongs to the peroxidase family. In terms of assembly, heterodimer with DUOXA2; disulfide-linked. Interacts with TXNDC11, TPO and CYBA. In terms of processing, N-glycosylated. As to expression, expressed in colon, small intestine, duodenum and tracheal surface epithelial cells (at protein level). Expressed in thyrocytes. Also detected in kidney, liver, lung, pancreas, prostate, salivary glands, rectum and testis.

Its subcellular location is the apical cell membrane. It localises to the cell junction. It catalyses the reaction NADH + O2 + H(+) = H2O2 + NAD(+). The enzyme catalyses NADPH + O2 + H(+) = H2O2 + NADP(+). It participates in hormone biosynthesis; thyroid hormone biosynthesis. Peroxidase activity is inhibited by aminobenzohydrazide. The NADPH oxidase activity is calcium-dependent. Generates hydrogen peroxide which is required for the activity of thyroid peroxidase/TPO and lactoperoxidase/LPO. Plays a role in thyroid hormones synthesis and lactoperoxidase-mediated antimicrobial defense at the surface of mucosa. May have its own peroxidase activity through its N-terminal peroxidase-like domain. This is Dual oxidase 2 (DUOX2) from Homo sapiens (Human).